The following is a 138-amino-acid chain: Putative pre-16S rRNA nuclease (138 aa).

This sequence belongs to the YqgF nuclease family.

The protein localises to the cytoplasm. In terms of biological role, could be a nuclease involved in processing of the 5'-end of pre-16S rRNA. This Azobacteroides pseudotrichonymphae genomovar. CFP2 protein is Putative pre-16S rRNA nuclease.